A 160-amino-acid polypeptide reads, in one-letter code: MAEDKTYPMTEEGKVKLEKELEDLRINQRPEIINRIKIARSYGDLSENSEYESAKNEQSLLENRIKTVEHMLQYAEIIDSDKIDETEVSVGKIVTFKELPDEEPESYTIVGAAEADPMVGKISNDSPIAKGLIGHHVDEEVAINIPAGTMTVKILKVENA.

Positions 9–73 form a coiled coil; sequence MTEEGKVKLE…RIKTVEHMLQ (65 aa).

Belongs to the GreA/GreB family.

Its function is as follows. Necessary for efficient RNA polymerase transcription elongation past template-encoded arresting sites. The arresting sites in DNA have the property of trapping a certain fraction of elongating RNA polymerases that pass through, resulting in locked ternary complexes. Cleavage of the nascent transcript by cleavage factors such as GreA or GreB allows the resumption of elongation from the new 3'terminus. GreA releases sequences of 2 to 3 nucleotides. This is Transcription elongation factor GreA 2 from Lactiplantibacillus plantarum (strain ATCC BAA-793 / NCIMB 8826 / WCFS1) (Lactobacillus plantarum).